The chain runs to 369 residues: Queuine tRNA-ribosyltransferase (369 aa).

The active-site Proton acceptor is aspartate 89. Residues 89–93 (DSGGF), aspartate 142, glutamine 184, and glycine 211 contribute to the substrate site. The interval 242–248 (GGGSPEL) is RNA binding. Aspartate 261 serves as the catalytic Nucleophile. The tract at residues 266–270 (TRIAR) is RNA binding; important for wobble base 34 recognition. The Zn(2+) site is built by cysteine 299, cysteine 301, cysteine 304, and histidine 330.

This sequence belongs to the queuine tRNA-ribosyltransferase family. As to quaternary structure, homodimer. Within each dimer, one monomer is responsible for RNA recognition and catalysis, while the other monomer binds to the replacement base PreQ1. Zn(2+) serves as cofactor.

The catalysed reaction is 7-aminomethyl-7-carbaguanine + guanosine(34) in tRNA = 7-aminomethyl-7-carbaguanosine(34) in tRNA + guanine. The protein operates within tRNA modification; tRNA-queuosine biosynthesis. In terms of biological role, catalyzes the base-exchange of a guanine (G) residue with the queuine precursor 7-aminomethyl-7-deazaguanine (PreQ1) at position 34 (anticodon wobble position) in tRNAs with GU(N) anticodons (tRNA-Asp, -Asn, -His and -Tyr). Catalysis occurs through a double-displacement mechanism. The nucleophile active site attacks the C1' of nucleotide 34 to detach the guanine base from the RNA, forming a covalent enzyme-RNA intermediate. The proton acceptor active site deprotonates the incoming PreQ1, allowing a nucleophilic attack on the C1' of the ribose to form the product. After dissociation, two additional enzymatic reactions on the tRNA convert PreQ1 to queuine (Q), resulting in the hypermodified nucleoside queuosine (7-(((4,5-cis-dihydroxy-2-cyclopenten-1-yl)amino)methyl)-7-deazaguanosine). The polypeptide is Queuine tRNA-ribosyltransferase (Thermotoga maritima (strain ATCC 43589 / DSM 3109 / JCM 10099 / NBRC 100826 / MSB8)).